Here is a 138-residue protein sequence, read N- to C-terminus: Large ribosomal subunit protein bL17 (138 aa).

Belongs to the bacterial ribosomal protein bL17 family. As to quaternary structure, part of the 50S ribosomal subunit. Contacts protein L32.

The polypeptide is Large ribosomal subunit protein bL17 (Nitrobacter hamburgensis (strain DSM 10229 / NCIMB 13809 / X14)).